The primary structure comprises 75 residues: Kappa-thalatoxin-Tas2a (75 aa).

The signal sequence occupies residues 1–22 (MKFQMIAAVLLIAFCLSVVVTA). A propeptide spanning residues 23-40 (RMELQDDEEMKNGSFQKR) is cleaved from the precursor. The region spanning 43 to 75 (CIDTIPKSRCTAFQCKHSMKYRLSFCRKTCGTC) is the ShKT domain. 3 disulfide bridges follow: C43-C75, C52-C68, and C57-C72.

This sequence belongs to the sea anemone type 1 potassium channel toxin family. Type 1a subfamily.

Its subcellular location is the secreted. It localises to the nematocyst. Its function is as follows. Inhibits voltage-gated potassium channels (Kv) with higher potency for Kv1.1/KCNA1 and Kv1.3/KCNA3 (IC(50)=3.4 nM). In Thalassianthus aster (Fuzzy-tipped anemone), this protein is Kappa-thalatoxin-Tas2a.